The chain runs to 263 residues: Syntaxin pep12 (263 aa).

The disordered stretch occupies residues 140-159 (RNVSLSNNSSGQRQPLTESK). Over residues 142 to 159 (VSLSNNSSGQRQPLTESK) the composition is skewed to polar residues. 2 positions are modified to phosphoserine: Ser148 and Ser163. A t-SNARE coiled-coil homology domain is found at 169–231 (QRLINERQGE…KNASRQLQIA (63 aa)).

This sequence belongs to the syntaxin family.

It is found in the endoplasmic reticulum. Has a role in vesicle-mediated transport but not with protein transport from Golgi to vesicle. This Schizosaccharomyces pombe (strain 972 / ATCC 24843) (Fission yeast) protein is Syntaxin pep12 (pep12).